The following is a 308-amino-acid chain: Olfactory receptor 2T6 (308 aa).

Over 1 to 28 the chain is Extracellular; the sequence is MNENNETLTRGFTLMGLFTHNKCSGFFF. A glycan (N-linked (GlcNAc...) asparagine) is linked at Asn5. The chain crosses the membrane as a helical span at residues 29 to 49; it reads GVICAVFFMAMIANGVMIFLI. Topologically, residues 50 to 57 are cytoplasmic; that stretch reads NIDPHLHT. A helical membrane pass occupies residues 58–78; it reads PMYFLLSHLSVIDTLYISTIV. Topologically, residues 79–98 are extracellular; sequence PKMLVDYLMGEGTISFIACT. Residues Cys97 and Cys179 are joined by a disulfide bond. A helical transmembrane segment spans residues 99 to 119; it reads AQCFLYMGFMGAEFFLLGLMA. Residues 120 to 145 are Cytoplasmic-facing; the sequence is YDRYVAICNPLRYPVLISWRVCWMIL. Residues 146–166 traverse the membrane as a helical segment; it reads ASSWFGGALDSFLLTPITMSL. At 167–203 the chain is on the extracellular side; it reads PFCASHQINHFFCEAPTMLRLACGDKTTYETVMYVCC. A helical membrane pass occupies residues 204-224; that stretch reads VAMLLIPFSVVTASYTRILIT. Residues 225 to 236 are Cytoplasmic-facing; sequence VHQMTSAEGRKK. A helical membrane pass occupies residues 237-257; the sequence is AFATCSSHMMVVTLFYGAALY. The Extracellular segment spans residues 258–271; sequence TYTLPQSYHTPIKD. A helical membrane pass occupies residues 272–292; sequence KVFSAFYTILTPLLNPLIYSL. Residues 293–308 lie on the Cytoplasmic side of the membrane; sequence RNRDVMGALKRVVARC.

This sequence belongs to the G-protein coupled receptor 1 family.

The protein resides in the cell membrane. Functionally, odorant receptor. The protein is Olfactory receptor 2T6 (OR2T6) of Homo sapiens (Human).